A 172-amino-acid chain; its full sequence is Lipoprotein signal peptidase (172 aa).

3 helical membrane passes run 10 to 30 (LIWL…KAWV), 68 to 88 (WQLW…AFWL), and 98 to 118 (SALP…DRLM). Catalysis depends on residues Asp-124 and Asp-142. A helical transmembrane segment spans residues 138 to 158 (FNIADSAIVGGAIGIAVFGLF).

The protein belongs to the peptidase A8 family.

The protein resides in the cell inner membrane. It catalyses the reaction Release of signal peptides from bacterial membrane prolipoproteins. Hydrolyzes -Xaa-Yaa-Zaa-|-(S,diacylglyceryl)Cys-, in which Xaa is hydrophobic (preferably Leu), and Yaa (Ala or Ser) and Zaa (Gly or Ala) have small, neutral side chains.. The protein operates within protein modification; lipoprotein biosynthesis (signal peptide cleavage). This protein specifically catalyzes the removal of signal peptides from prolipoproteins. This Xanthomonas axonopodis pv. citri (strain 306) protein is Lipoprotein signal peptidase.